The chain runs to 300 residues: Transcription initiation factor IIB (300 aa).

A TFIIB-type zinc finger spans residues 2-34 (TKQKVCPVCGSTEFIYDPERGEIVCARCGYVIE). Residues Cys7, Cys10, Cys26, and Cys29 each coordinate Zn(2+). 2 tandem repeats follow at residues 114–197 (SELD…ARNL) and 210–291 (DYVN…ELVE).

Belongs to the TFIIB family.

Functionally, stabilizes TBP binding to an archaeal box-A promoter. Also responsible for recruiting RNA polymerase II to the pre-initiation complex (DNA-TBP-TFIIB). The sequence is that of Transcription initiation factor IIB from Pyrococcus horikoshii (strain ATCC 700860 / DSM 12428 / JCM 9974 / NBRC 100139 / OT-3).